The primary structure comprises 947 residues: Leucine-rich repeat-containing protein 37B (947 aa).

Positions 1-27 are cleaved as a signal peptide; the sequence is MSWLRFWGPWPLLTWQLLSLLVKEAQP. The Extracellular segment spans residues 28-905; that stretch reads LVWVKDPLQL…EVPGDDYKNK (878 aa). 4 disordered regions span residues 42–88, 226–257, 294–458, and 484–514; these read LGPP…ALPQ, YLSM…QVGL, EVEP…PEPT, and SLTE…EQKA. Polar residues predominate over residues 311-320; the sequence is SMESLAQTPL. N-linked (GlcNAc...) asparagine glycosylation is present at asparagine 358. Polar residues-rich tracts occupy residues 404 to 415, 436 to 445, and 495 to 507; these read GQAQHSHLTEAT, SPTTEETSAQ, and LESS…QSET. LRR repeat units lie at residues 556 to 577, 580 to 601, 604 to 625, 628 to 649, 655 to 676, and 679 to 699; these read IFTT…VWKA, WTEK…SFEG, YLQY…TFES, FLQY…TFQA, FLHN…YLFE, and ALKY…KNIL. An N-linked (GlcNAc...) asparagine glycan is attached at asparagine 789. Residues 867-897 are a coiled coil; it reads DTDQQKTNYINENMEQNEQKEQKSSELMKEV. Residues 906-926 form a helical membrane-spanning segment; sequence LIFAISVTVILIILIIIFCLI. Topologically, residues 927–947 are cytoplasmic; sequence EVNSHKRASEKYKDNPSISGA.

The protein localises to the membrane. The polypeptide is Leucine-rich repeat-containing protein 37B (LRRC37B) (Homo sapiens (Human)).